The primary structure comprises 236 residues: Exosome complex component Rrp4 (236 aa).

Residues 64 to 133 (GDKVIGKIIE…EIKESWLTLK (70 aa)) enclose the S1 motif domain. In terms of domain architecture, KH spans 141 to 199 (EGGHMVLIHASRVPRVIGKGGGMVNMVKELTSTRIIIGQNGLIWIDGPIEGVTMAIAAI).

Belongs to the RRP4 family. In terms of assembly, component of the archaeal exosome complex. Forms a trimer of Rrp4 and/or Csl4 subunits. The trimer associates with a hexameric ring-like arrangement composed of 3 Rrp41-Rrp42 heterodimers.

It is found in the cytoplasm. In terms of biological role, non-catalytic component of the exosome, which is a complex involved in RNA degradation. Increases the RNA binding and the efficiency of RNA degradation. Confers strong poly(A) specificity to the exosome. This chain is Exosome complex component Rrp4, found in Thermoplasma volcanium (strain ATCC 51530 / DSM 4299 / JCM 9571 / NBRC 15438 / GSS1).